Consider the following 250-residue polypeptide: MTLSHGELLYEGKAKRIYASADDQQVLVEFKNDATAFNAQKKAQLEHKGRLNCQISACLFELLERHGIPTHYVGVADATWMVVQRVEVIPIEVVLRNTATGSLCRETPIPQGTALDPALLDLYYKDDALGDPLLTDARIALLGVVSAELRQRMEALARQVNAVLQPFFKDLGLQLVDFKLELGLNQAGELLVADEISPDTCRLWDLSSTDANERILDKDRFRKDLGGVIEAYGEVCKRVQGACPQPRNCG.

This sequence belongs to the SAICAR synthetase family.

It catalyses the reaction 5-amino-1-(5-phospho-D-ribosyl)imidazole-4-carboxylate + L-aspartate + ATP = (2S)-2-[5-amino-1-(5-phospho-beta-D-ribosyl)imidazole-4-carboxamido]succinate + ADP + phosphate + 2 H(+). It functions in the pathway purine metabolism; IMP biosynthesis via de novo pathway; 5-amino-1-(5-phospho-D-ribosyl)imidazole-4-carboxamide from 5-amino-1-(5-phospho-D-ribosyl)imidazole-4-carboxylate: step 1/2. The chain is Phosphoribosylaminoimidazole-succinocarboxamide synthase from Synechococcus sp. (strain WH7803).